The primary structure comprises 282 residues: Halorhodopsin (282 aa).

Residues 1-29 are Extracellular-facing; that stretch reads MMETAADALASGTVPLEMTQTQIFEAIQG. Residues 30–55 traverse the membrane as a helical segment; it reads DTLLASSLWINIALAGLSILLFVYMG. The Cytoplasmic portion of the chain corresponds to 56–61; it reads RNLEDP. The chain crosses the membrane as a helical span at residues 62 to 85; it reads RAQLIFVATLMVPLVSISSYTGLV. Residues 86–109 lie on the Extracellular side of the membrane; sequence SGLTVSFLEMPAGHALAGQEVLTP. A helical membrane pass occupies residues 110-131; sequence WGRYLTWALSTPMILVALGLLA. Residues 132–134 are Cytoplasmic-facing; that stretch reads GSN. The chain crosses the membrane as a helical span at residues 135-158; that stretch reads ATKLFTAVTADIGMCVTGLAAALT. At 159-161 the chain is on the extracellular side; the sequence is TSS. A helical transmembrane segment spans residues 162-184; sequence YLLRWVWYVISCAFFVVVLYVLL. Over 185 to 196 the chain is Cytoplasmic; that stretch reads AEWAEDAEVAGT. The helical transmembrane segment at 197 to 220 threads the bilayer; that stretch reads AEIFNTLKLLTVVLWLGYPIFWAL. Residues 221 to 229 lie on the Extracellular side of the membrane; the sequence is GAEGLAVLD. The chain crosses the membrane as a helical span at residues 230-258; that stretch reads VAVTSWAYSGMDIVAKYLFAFLLLRWVVD. Lys-245 carries the post-translational modification N6-(retinylidene)lysine. Residues 259 to 282 are Cytoplasmic-facing; sequence NERTVAGMAAGLGAPLARCAPADD.

It belongs to the archaeal/bacterial/fungal opsin family.

It localises to the cell membrane. Its function is as follows. Light-driven chloride pump. This is Halorhodopsin (hop) from Halorubrum sodomense.